A 386-amino-acid chain; its full sequence is Succinate--CoA ligase [ADP-forming] subunit beta (386 aa).

Residues 9–244 (KELLRSYGVP…ETEEDPREVE (236 aa)) form the ATP-grasp domain. Residues Lys-46, 53-55 (GRG), Glu-99, Cys-102, and Glu-107 each bind ATP. Mg(2+)-binding residues include Asn-199 and Asp-213. Residues Asn-264 and 321–323 (GIM) contribute to the substrate site.

The protein belongs to the succinate/malate CoA ligase beta subunit family. As to quaternary structure, heterotetramer of two alpha and two beta subunits. It depends on Mg(2+) as a cofactor.

The enzyme catalyses succinate + ATP + CoA = succinyl-CoA + ADP + phosphate. It carries out the reaction GTP + succinate + CoA = succinyl-CoA + GDP + phosphate. The protein operates within carbohydrate metabolism; tricarboxylic acid cycle; succinate from succinyl-CoA (ligase route): step 1/1. In terms of biological role, succinyl-CoA synthetase functions in the citric acid cycle (TCA), coupling the hydrolysis of succinyl-CoA to the synthesis of either ATP or GTP and thus represents the only step of substrate-level phosphorylation in the TCA. The beta subunit provides nucleotide specificity of the enzyme and binds the substrate succinate, while the binding sites for coenzyme A and phosphate are found in the alpha subunit. In Exiguobacterium sibiricum (strain DSM 17290 / CCUG 55495 / CIP 109462 / JCM 13490 / 255-15), this protein is Succinate--CoA ligase [ADP-forming] subunit beta.